The sequence spans 151 residues: Methylglyoxal synthase (151 aa).

The MGS-like domain maps to R6–M151. Residues H19, K23, T45–T48, and S65–G66 contribute to the substrate site. D71 serves as the catalytic Proton donor/acceptor. H98 serves as a coordination point for substrate.

Belongs to the methylglyoxal synthase family.

The enzyme catalyses dihydroxyacetone phosphate = methylglyoxal + phosphate. In terms of biological role, catalyzes the formation of methylglyoxal from dihydroxyacetone phosphate. The sequence is that of Methylglyoxal synthase from Vibrio parahaemolyticus serotype O3:K6 (strain RIMD 2210633).